The chain runs to 833 residues: Leucine--tRNA ligase (833 aa).

Residues 41-52 carry the 'HIGH' region motif; the sequence is PYPSGAGLHVGH. The 'KMSKS' region signature appears at 610-614; the sequence is KMSKS. Lysine 613 contacts ATP.

This sequence belongs to the class-I aminoacyl-tRNA synthetase family.

It localises to the cytoplasm. It catalyses the reaction tRNA(Leu) + L-leucine + ATP = L-leucyl-tRNA(Leu) + AMP + diphosphate. The polypeptide is Leucine--tRNA ligase (Streptococcus pneumoniae (strain CGSP14)).